The sequence spans 965 residues: Villin-3 (965 aa).

Gelsolin-like repeat units lie at residues 27 to 79 (ENFE…DEAG), 150 to 190 (VHLK…QERA), 262 to 304 (GQVE…EERK), 401 to 452 (ANSK…EDQE), 533 to 573 (NKAL…EQQE), and 635 to 676 (FQVE…KEKQ). 2 stretches are compositionally biased toward low complexity: residues 769–780 (AFNSSSGRTSSP) and 808–828 (SSPS…ASQR). 2 disordered regions span residues 769-828 (AFNS…ASQR) and 840-906 (TAEK…GVTF). Acidic residues predominate over residues 865-879 (EATEEATEAKEEEEV). Serine 880 is modified (phosphoserine). The HP domain maps to 900–965 (ETTGVTFTYE…DLLKKKFNLF (66 aa)).

Belongs to the villin/gelsolin family. In terms of tissue distribution, expressed in all tissues examined, including root hairs.

The protein localises to the cytoplasm. The protein resides in the cytoskeleton. Binds actin and actin filament bundles in a Ca(2+)-insensitive manner, but severs actin filaments in a calcium-dependent manner, regardless of the presence or not of VLN1 (AC O81643). Acts redundantly with VLN2 (AC O81644) to generate thick actin filament bundles, to regulate directional organ growth and in sclerenchyma development. The sequence is that of Villin-3 from Arabidopsis thaliana (Mouse-ear cress).